Consider the following 642-residue polypeptide: Glutamyl-tRNA(Gln) amidotransferase subunit E (642 aa).

It belongs to the GatB/GatE family. GatE subfamily. Heterodimer of GatD and GatE.

The catalysed reaction is L-glutamyl-tRNA(Gln) + L-glutamine + ATP + H2O = L-glutaminyl-tRNA(Gln) + L-glutamate + ADP + phosphate + H(+). In terms of biological role, allows the formation of correctly charged Gln-tRNA(Gln) through the transamidation of misacylated Glu-tRNA(Gln) in organisms which lack glutaminyl-tRNA synthetase. The reaction takes place in the presence of glutamine and ATP through an activated gamma-phospho-Glu-tRNA(Gln). The GatDE system is specific for glutamate and does not act on aspartate. The chain is Glutamyl-tRNA(Gln) amidotransferase subunit E from Aeropyrum pernix (strain ATCC 700893 / DSM 11879 / JCM 9820 / NBRC 100138 / K1).